The following is a 110-amino-acid chain: Phosphoribosyl-AMP cyclohydrolase (110 aa).

Residue Asp80 coordinates Mg(2+). Residue Cys81 coordinates Zn(2+). Residues Asp82 and Asp84 each coordinate Mg(2+). Cys97 and Cys104 together coordinate Zn(2+).

The protein belongs to the PRA-CH family. Homodimer. Requires Mg(2+) as cofactor. Zn(2+) serves as cofactor.

Its subcellular location is the cytoplasm. It carries out the reaction 1-(5-phospho-beta-D-ribosyl)-5'-AMP + H2O = 1-(5-phospho-beta-D-ribosyl)-5-[(5-phospho-beta-D-ribosylamino)methylideneamino]imidazole-4-carboxamide. Its pathway is amino-acid biosynthesis; L-histidine biosynthesis; L-histidine from 5-phospho-alpha-D-ribose 1-diphosphate: step 3/9. In terms of biological role, catalyzes the hydrolysis of the adenine ring of phosphoribosyl-AMP. The polypeptide is Phosphoribosyl-AMP cyclohydrolase (Clostridium botulinum (strain 657 / Type Ba4)).